The chain runs to 1342 residues: MVYSYTEKKRIRKDFGKRPQVLDVPYLLSIQLDSFQKFIEQDPEGQCGLEAAFRSVFPIQSYSGNSELQYVSYRLGEPVFDVQECQIRGVTYSAPLRVKLRLVIYEREAPEGTVKDIKEQEVYMGEIPLMTDNGTFVINGTERVIVSQLHRSPGVFFDSDKGKTHSSGKVLYNARIIPYRGSWLDFEFDPKDNLFVRIDRRRKLPATIILRALNYTTEQILDLFFEKVVFEIRDNKLQMELIPERLRGETASFDIEANGKVYVEKGRRITARHIRQLEKDDIKHIEVPVEYIAGKVVSKDYVDESTGELICAANMELSLDLLAKLSQSGHKRIETLFTNDLDHGPYISETVRVDPTNDRLSALVEIYRMMRPGEPPTREAAESLFENLFFSEDRYDLSAVGRMKFNRSLLRDEIEGSGILSKDDIIDVMKKLIDIRNGKGEVDDIDHLGNRRIRSVGEMAENQFRVGLVRVERAVKERLSLGDLDTLMPQDMINAKPISAAVKEFFGSSQLSQFMDQNNPLSEITHKRRISALGPGGLTRERAGFEVRDVHPTHYGRVCPIETPEGPNIGLINSLSVYAQTNEYGFLETPYRRVVDGVVTDEIHYLSAIEEGNYVIAQANSNLDDEGHFVEDLVTCRSKGESSLFSRDQVDYMDVSTQQVVSVGASLIPFLEHDDANRALMGANMQRQAVPTLRADKPLVGTGMERAVAVDSGVTAVAKRGGTVQYVDASRIVIKVNEDEMYPGEAGIDIYNLTKYTRSNQNTCINQMPCVSLGEPVERGDVLADGPSTDLGELALGQNMRVAFMPWNGYNFEDSILVSERVVQEDRFTTIHIQELACVSRDTKLGPEEITADIPNVGEAALSKLDESGIVYIGAEVTGGDILVGKVTPKGETQLTPEEKLLRAIFGEKASDVKDSSLRVPNGVSGTVIDVQVFTRDGVEKDKRALEIEEMQLKQAKKDLSEELQILEAGLFSRIRAVLVSGGVEAEKLDKLPRDRWLELGLTDEEKQNQLEQLAEQYDELKHEFEKKLEAKRRKITKGDDLAPGVLKIVKVYLAVKRRIQPGDKMAGRHGNKGVISKINPIEDMPYDENGTPVDIVLNPLGVPSRMNIGQILETHLGMAAKGIGDKINAMLKQQQEVAKLREFIQRAYDLGADVRQKVDLSTFSDDEVLRLAENLRKGMPIATPVFDGAKEAEIKELLKLGDLPTSGQITLFDGRTGEQFERPVTVGYMYMLKLNHLVDDKMHARSTGSYSLVTQQPLGGKAQFGGQRFGEMEVWALEAYGAAYTLQEMLTVKSDDVNGRTKMYKNIVDGNHQMEPGMPESFNVLLKEIRSLGINIELEDE.

It belongs to the RNA polymerase beta chain family. As to quaternary structure, the RNAP catalytic core consists of 2 alpha, 1 beta, 1 beta' and 1 omega subunit. When a sigma factor is associated with the core the holoenzyme is formed, which can initiate transcription.

The catalysed reaction is RNA(n) + a ribonucleoside 5'-triphosphate = RNA(n+1) + diphosphate. DNA-dependent RNA polymerase catalyzes the transcription of DNA into RNA using the four ribonucleoside triphosphates as substrates. This Salmonella gallinarum (strain 287/91 / NCTC 13346) protein is DNA-directed RNA polymerase subunit beta.